We begin with the raw amino-acid sequence, 438 residues long: MKIALIDGEHYPDVVKWALDKLGNVCCAVFLGGSEKIGSLEEVERRLGVPIYRHDDYLTALARALAENPGVKEVVDLSDEPIVGYEDRFRIASLCLLHGVTYRGADFVFKPRPLNRTSKPSIGVIGTGKRVGKTAVSGFVARTLKAITRPVIVTMGRGGPEEPELIDGEKLEITPEFLLRIAESGRHAASDHFEDALTSRVTTIGCRRCGGGMAGFPFFDAVDRGISLAESLPHDLIILEGSGATFPPYRADAYVVVVGARQELSSIANYFGPFRLSLADLVVVTMADLVKEEKIEKIVGVVEGVIPRAEVHVTVFRPRPLGDVSGKRIGLVMTSEEALESSARHLEALGAEVLHSSGNLSRRKALLRDLEGFSGIEGIAVELKAAAVDVVTRWALERGIEVIYLDNEPVNIDGKNLREAVLRLGKKVLGRRADDTRR.

Belongs to the cyclic 2,3-diphosphoglycerate synthetase family.

The protein resides in the cytoplasm. The enzyme catalyses (2R)-2,3-bisphosphoglycerate + ATP + H(+) = cyclic (2R)-2,3-bisphosphoglycerate + ADP + phosphate. In terms of biological role, catalyzes the formation of cyclic 2,3-diphosphoglycerate (cDPG) by formation of an intramolecular phosphoanhydride bond at the expense of ATP. This chain is Cyclic 2,3-diphosphoglycerate synthetase, found in Thermococcus gammatolerans (strain DSM 15229 / JCM 11827 / EJ3).